The following is a 589-amino-acid chain: uncharacterized protein (589 aa).

Disordered regions lie at residues 328–365 (LSSTSDASAAPAGVAGGGKARQMQFSQGGSGQGAEDGP), 379–459 (SLLG…DPSN), 525–555 (RSTSRLDAGEGQGDDDDEEDGQAEKYEGAVK), and 569–589 (VRGTKVVVQPSPPGDDSSRDM). Residues 398-425 (VSLSSASTSARPTQRRSSLTPCSQTPQE) show a composition bias toward polar residues. Positions 426 to 445 (THQHAREALTTRMESQREAN) are enriched in basic and acidic residues. The segment covering 536 to 545 (QGDDDDEEDG) has biased composition (acidic residues).

This is an uncharacterized protein from Mycosarcoma maydis (Corn smut fungus).